The following is a 137-amino-acid chain: Probable 4-amino-4-deoxy-L-arabinose-phosphoundecaprenol flippase subunit ArnF (137 aa).

Over 1-3 the chain is Cytoplasmic; it reads MNA. A helical membrane pass occupies residues 4–24; the sequence is LRGWLAALGSVLLASAAQLGM. The Periplasmic portion of the chain corresponds to 25-44; that stretch reads RWGMSRLPLPEAWAGQTPER. The helical transmembrane segment at 45-65 threads the bilayer; the sequence is AALLAVALAVAAYAASLLCWL. The Cytoplasmic segment spans residues 66–76; the sequence is AALRHLPLGRA. The chain crosses the membrane as a helical span at residues 77-97; sequence YSLLSASYALVYLLAASLPAF. Topologically, residues 98–100 are periplasmic; sequence DET. Residues 101–121 traverse the membrane as a helical segment; the sequence is FSTSKTLGVGLVVLGVLTVNA. At 122–137 the chain is on the cytoplasmic side; it reads RRTAAAPAHHPSRKAP.

This sequence belongs to the ArnF family. As to quaternary structure, heterodimer of ArnE and ArnF.

It localises to the cell inner membrane. Its pathway is bacterial outer membrane biogenesis; lipopolysaccharide biosynthesis. Functionally, translocates 4-amino-4-deoxy-L-arabinose-phosphoundecaprenol (alpha-L-Ara4N-phosphoundecaprenol) from the cytoplasmic to the periplasmic side of the inner membrane. The polypeptide is Probable 4-amino-4-deoxy-L-arabinose-phosphoundecaprenol flippase subunit ArnF (Pseudomonas aeruginosa (strain ATCC 15692 / DSM 22644 / CIP 104116 / JCM 14847 / LMG 12228 / 1C / PRS 101 / PAO1)).